The primary structure comprises 554 residues: Dihydroxy-acid dehydratase (554 aa).

Cysteine 48 contacts [2Fe-2S] cluster. Aspartate 80 provides a ligand contact to Mg(2+). Cysteine 121 is a [2Fe-2S] cluster binding site. Mg(2+) is bound by residues aspartate 122 and lysine 123. The residue at position 123 (lysine 123) is an N6-carboxylysine. Cysteine 193 provides a ligand contact to [2Fe-2S] cluster. Glutamate 444 serves as a coordination point for Mg(2+). Serine 470 functions as the Proton acceptor in the catalytic mechanism.

It belongs to the IlvD/Edd family. As to quaternary structure, homodimer. The cofactor is [2Fe-2S] cluster. Mg(2+) serves as cofactor.

The enzyme catalyses (2R)-2,3-dihydroxy-3-methylbutanoate = 3-methyl-2-oxobutanoate + H2O. The catalysed reaction is (2R,3R)-2,3-dihydroxy-3-methylpentanoate = (S)-3-methyl-2-oxopentanoate + H2O. It functions in the pathway amino-acid biosynthesis; L-isoleucine biosynthesis; L-isoleucine from 2-oxobutanoate: step 3/4. The protein operates within amino-acid biosynthesis; L-valine biosynthesis; L-valine from pyruvate: step 3/4. Its function is as follows. Functions in the biosynthesis of branched-chain amino acids. Catalyzes the dehydration of (2R,3R)-2,3-dihydroxy-3-methylpentanoate (2,3-dihydroxy-3-methylvalerate) into 2-oxo-3-methylpentanoate (2-oxo-3-methylvalerate) and of (2R)-2,3-dihydroxy-3-methylbutanoate (2,3-dihydroxyisovalerate) into 2-oxo-3-methylbutanoate (2-oxoisovalerate), the penultimate precursor to L-isoleucine and L-valine, respectively. The sequence is that of Dihydroxy-acid dehydratase from Tremblaya princeps.